The sequence spans 448 residues: Delta(14)-sterol reductase ERG24 (448 aa).

7 consecutive transmembrane segments (helical) span residues 18–38 (ISGALGITIGLPTLTVLFYLL), 75–95 (CWSAYLAWFFILVILDYLLPG), 108–128 (VLNYKINGLSMSSLLIVLLLA), 157–177 (IIICFLFSFMLAVFVYIISFI), 251–271 (VTDSMIVVNLLQAFYIFDGVL), 279–299 (MIDITTDGFGFMLSFGDLAWV), and 318–338 (NLGWTLSLLIVGLQALGFYIF). NADP(+) is bound by residues Lys-345, Arg-349, Leu-368, Trp-373, and 380–381 (NY). A helical membrane pass occupies residues 394 to 414 (PTGFQTPLTYFYVIYFASLLI). Residues Asp-420, 424-428 (CRAKY), and Tyr-435 each bind NADP(+).

It belongs to the ERG4/ERG24 family.

Its subcellular location is the endoplasmic reticulum membrane. It catalyses the reaction 4,4-dimethyl-5alpha-cholesta-8,24-dien-3beta-ol + NADP(+) = 4,4-dimethyl-5alpha-cholesta-8,14,24-trien-3beta-ol + NADPH + H(+). Its pathway is steroid biosynthesis; zymosterol biosynthesis; zymosterol from lanosterol: step 2/6. Functionally, C-14 sterol reductase; part of the third module of ergosterol biosynthesis pathway that includes the late steps of the pathway. ERG24 reduces the C14=C15 double bond of 4,4-dimethyl-cholesta-8,14,24-trienol to produce 4,4-dimethyl-cholesta-8,24-dienol. The third module or late pathway involves the ergosterol synthesis itself through consecutive reactions that mainly occur in the endoplasmic reticulum (ER) membrane. Firstly, the squalene synthase ERG9 catalyzes the condensation of 2 farnesyl pyrophosphate moieties to form squalene, which is the precursor of all steroids. Squalene synthase is crucial for balancing the incorporation of farnesyl diphosphate (FPP) into sterol and nonsterol isoprene synthesis. Secondly, the squalene epoxidase ERG1 catalyzes the stereospecific oxidation of squalene to (S)-2,3-epoxysqualene, which is considered to be a rate-limiting enzyme in steroid biosynthesis. Then, the lanosterol synthase ERG7 catalyzes the cyclization of (S)-2,3 oxidosqualene to lanosterol, a reaction that forms the sterol core. In the next steps, lanosterol is transformed to zymosterol through a complex process involving various demethylation, reduction and desaturation reactions. The lanosterol 14-alpha-demethylase ERG11 (also known as CYP51) catalyzes C14-demethylation of lanosterol to produce 4,4'-dimethyl cholesta-8,14,24-triene-3-beta-ol, which is critical for ergosterol biosynthesis. The C-14 reductase ERG24 reduces the C14=C15 double bond of 4,4-dimethyl-cholesta-8,14,24-trienol to produce 4,4-dimethyl-cholesta-8,24-dienol. 4,4-dimethyl-cholesta-8,24-dienol is substrate of the C-4 demethylation complex ERG25-ERG26-ERG27 in which ERG25 catalyzes the three-step monooxygenation required for the demethylation of 4,4-dimethyl and 4alpha-methylsterols, ERG26 catalyzes the oxidative decarboxylation that results in a reduction of the 3-beta-hydroxy group at the C-3 carbon to an oxo group, and ERG27 is responsible for the reduction of the keto group on the C-3. ERG28 has a role as a scaffold to help anchor ERG25, ERG26 and ERG27 to the endoplasmic reticulum and ERG29 regulates the activity of the iron-containing C4-methylsterol oxidase ERG25. Then, the sterol 24-C-methyltransferase ERG6 catalyzes the methyl transfer from S-adenosyl-methionine to the C-24 of zymosterol to form fecosterol. The C-8 sterol isomerase ERG2 catalyzes the reaction which results in unsaturation at C-7 in the B ring of sterols and thus converts fecosterol to episterol. The sterol-C5-desaturase ERG3 then catalyzes the introduction of a C-5 double bond in the B ring to produce 5-dehydroepisterol. The C-22 sterol desaturase ERG5 further converts 5-dehydroepisterol into ergosta-5,7,22,24(28)-tetraen-3beta-ol by forming the C-22(23) double bond in the sterol side chain. Finally, ergosta-5,7,22,24(28)-tetraen-3beta-ol is substrate of the C-24(28) sterol reductase ERG4 to produce ergosterol. The sequence is that of Delta(14)-sterol reductase ERG24 from Candida albicans (strain SC5314 / ATCC MYA-2876) (Yeast).